Reading from the N-terminus, the 199-residue chain is Tumor necrosis factor ligand superfamily member 4 (199 aa).

The Cytoplasmic segment spans residues 1 to 25; the sequence is MEGEGVQPPDENLENGSRPRFKWKK. Residues 26–48 form a helical; Signal-anchor for type II membrane protein membrane-spanning segment; it reads VLRLVVSGIKAAGLLLCVVYVCL. The Extracellular segment spans residues 49 to 199; it reads QFSSSPAKDS…YSSTVNQVPL (151 aa). One can recognise a THD domain in the interval 59-176; it reads PIQRLRAPVT…QINDGELIIV (118 aa). Cystine bridges form between Cys-70-Cys-163 and Cys-98-Cys-184. N-linked (GlcNAc...) asparagine glycosylation is found at Asn-91 and Asn-157.

Belongs to the tumor necrosis factor family. In terms of assembly, homotrimer. Detected in T-cell lines, but not in a macrophage cell line.

The protein localises to the membrane. Cytokine that binds to TNFRSF4. Co-stimulates T-cell proliferation and cytokine production. The polypeptide is Tumor necrosis factor ligand superfamily member 4 (Tnfsf4) (Rattus norvegicus (Rat)).